The following is a 1111-amino-acid chain: Phytochrome C (1111 aa).

A GAF domain is found at 213 to 393; the sequence is NMLLLCDALV…VFGVQINKEA (181 aa). C318 provides a ligand contact to phytochromobilin. PAS domains lie at 604-674 and 737-808; these read IVNE…LEGS and DYAR…TKLR. In terms of domain architecture, Histidine kinase spans 889 to 1111; it reads YLRHEVKDPE…FVILTEFPLI (223 aa).

It belongs to the phytochrome family. In terms of assembly, homodimer. Post-translationally, contains one covalently linked phytochromobilin chromophore.

Regulatory photoreceptor which exists in two forms that are reversibly interconvertible by light: the Pr form that absorbs maximally in the red region of the spectrum and the Pfr form that absorbs maximally in the far-red region. Photoconversion of Pr to Pfr induces an array of morphogenic responses, whereas reconversion of Pfr to Pr cancels the induction of those responses. Pfr controls the expression of a number of nuclear genes including those encoding the small subunit of ribulose-bisphosphate carboxylase, chlorophyll A/B binding protein, protochlorophyllide reductase, rRNA, etc. It also controls the expression of its own gene(s) in a negative feedback fashion. This is Phytochrome C (PHYC) from Arabidopsis thaliana (Mouse-ear cress).